Here is a 220-residue protein sequence, read N- to C-terminus: Deoxyribose-phosphate aldolase (220 aa).

Catalysis depends on Asp89, which acts as the Proton donor/acceptor. Lys151 serves as the catalytic Schiff-base intermediate with acetaldehyde. The Proton donor/acceptor role is filled by Lys180.

It belongs to the DeoC/FbaB aldolase family. DeoC type 1 subfamily.

The protein resides in the cytoplasm. The catalysed reaction is 2-deoxy-D-ribose 5-phosphate = D-glyceraldehyde 3-phosphate + acetaldehyde. The protein operates within carbohydrate degradation; 2-deoxy-D-ribose 1-phosphate degradation; D-glyceraldehyde 3-phosphate and acetaldehyde from 2-deoxy-alpha-D-ribose 1-phosphate: step 2/2. Catalyzes a reversible aldol reaction between acetaldehyde and D-glyceraldehyde 3-phosphate to generate 2-deoxy-D-ribose 5-phosphate. The chain is Deoxyribose-phosphate aldolase from Streptococcus pneumoniae (strain CGSP14).